Consider the following 156-residue polypeptide: Small ribosomal subunit protein uS7 (156 aa).

It belongs to the universal ribosomal protein uS7 family. In terms of assembly, part of the 30S ribosomal subunit. Contacts proteins S9 and S11.

Its function is as follows. One of the primary rRNA binding proteins, it binds directly to 16S rRNA where it nucleates assembly of the head domain of the 30S subunit. Is located at the subunit interface close to the decoding center, probably blocks exit of the E-site tRNA. The polypeptide is Small ribosomal subunit protein uS7 (Clavibacter sepedonicus (Clavibacter michiganensis subsp. sepedonicus)).